The chain runs to 79 residues: CDC42 small effector protein 1-B (79 aa).

S-palmitoyl cysteine attachment occurs at residues Cys10 and Cys11. Positions Ile30 to Gly43 constitute a CRIB domain. Residues His41–Leu79 are disordered. Basic and acidic residues predominate over residues Met63 to Gln72.

Belongs to the CDC42SE/SPEC family.

The protein resides in the cytoplasm. It localises to the cytoskeleton. The protein localises to the cell membrane. Probably involved in the organization of the actin cytoskeleton by acting downstream of CDC42, inducing actin filament assembly. This chain is CDC42 small effector protein 1-B (cdc42se1-b), found in Xenopus laevis (African clawed frog).